A 419-amino-acid chain; its full sequence is Mitochondrial chaperone BCS1 (419 aa).

Residues 1 to 15 are Mitochondrial intermembrane-facing; it reads MPLSDFVLALKDNPY. The chain crosses the membrane as a helical span at residues 16–32; the sequence is FGAGFGLVGVGTALALA. Residues 33-419 lie on the Mitochondrial matrix side of the membrane; sequence RKGAQLGLVA…AIQNAESLRR (387 aa). Residue Y181 is modified to Phosphotyrosine. Residue 230 to 237 coordinates ATP; sequence GPPGCGKS.

Belongs to the AAA ATPase family. BCS1 subfamily. Interacts with LETM1.

The protein localises to the mitochondrion inner membrane. The enzyme catalyses ATP + H2O = ADP + phosphate + H(+). In terms of biological role, chaperone necessary for the incorporation of Rieske iron-sulfur protein UQCRFS1 into the mitochondrial respiratory chain complex III. Plays an important role in the maintenance of mitochondrial tubular networks, respiratory chain assembly and formation of the LETM1 complex. This chain is Mitochondrial chaperone BCS1 (BCS1L), found in Bos taurus (Bovine).